Here is a 317-residue protein sequence, read N- to C-terminus: Beta-ketoacyl-[acyl-carrier-protein] synthase III (317 aa).

Catalysis depends on residues Cys-112 and His-244. The ACP-binding stretch occupies residues 245–249 (QANLR). Asn-274 is a catalytic residue.

The protein belongs to the thiolase-like superfamily. FabH family. In terms of assembly, homodimer.

It is found in the cytoplasm. The catalysed reaction is malonyl-[ACP] + acetyl-CoA + H(+) = 3-oxobutanoyl-[ACP] + CO2 + CoA. It functions in the pathway lipid metabolism; fatty acid biosynthesis. Functionally, catalyzes the condensation reaction of fatty acid synthesis by the addition to an acyl acceptor of two carbons from malonyl-ACP. Catalyzes the first condensation reaction which initiates fatty acid synthesis and may therefore play a role in governing the total rate of fatty acid production. Possesses both acetoacetyl-ACP synthase and acetyl transacylase activities. Its substrate specificity determines the biosynthesis of branched-chain and/or straight-chain of fatty acids. The sequence is that of Beta-ketoacyl-[acyl-carrier-protein] synthase III from Serratia proteamaculans (strain 568).